The following is a 395-amino-acid chain: Small ribosomal subunit protein mS31 (395 aa).

The transit peptide at 1–65 (MFPRVSTFLP…IQRYFGTNSV (65 aa)) directs the protein to the mitochondrion. 2 disordered regions span residues 70–97 (KDKQ…NTKK) and 175–196 (SELL…DAKR). A compositionally biased stretch (basic and acidic residues) spans 183-196 (QHEEESRAQRDAKR).

Belongs to the mitochondrion-specific ribosomal protein mS31 family. Component of the mitochondrial small ribosomal subunit (mt-SSU). Mature mammalian 55S mitochondrial ribosomes consist of a small (28S) and a large (39S) subunit. The 28S small subunit contains a 12S ribosomal RNA (12S mt-rRNA) and 30 different proteins. The 39S large subunit contains a 16S rRNA (16S mt-rRNA), a copy of mitochondrial valine transfer RNA (mt-tRNA(Val)), which plays an integral structural role, and 52 different proteins.

It localises to the mitochondrion. The polypeptide is Small ribosomal subunit protein mS31 (MRPS31) (Homo sapiens (Human)).